The chain runs to 106 residues: Large ribosomal subunit protein eL42 (106 aa).

It belongs to the eukaryotic ribosomal protein eL42 family.

The polypeptide is Large ribosomal subunit protein eL42 (RPL44) (Kluyveromyces marxianus (Yeast)).